The following is an 87-amino-acid chain: DNA-directed RNA polymerase subunit omega (87 aa).

Belongs to the RNA polymerase subunit omega family. As to quaternary structure, the RNAP catalytic core consists of 2 alpha, 1 beta, 1 beta' and 1 omega subunit. When a sigma factor is associated with the core the holoenzyme is formed, which can initiate transcription.

The enzyme catalyses RNA(n) + a ribonucleoside 5'-triphosphate = RNA(n+1) + diphosphate. In terms of biological role, promotes RNA polymerase assembly. Latches the N- and C-terminal regions of the beta' subunit thereby facilitating its interaction with the beta and alpha subunits. This chain is DNA-directed RNA polymerase subunit omega, found in Acidothermus cellulolyticus (strain ATCC 43068 / DSM 8971 / 11B).